We begin with the raw amino-acid sequence, 33 residues long: Brevinin-2PTb (33 aa).

A disulfide bond links cysteine 27 and cysteine 33.

In terms of tissue distribution, expressed by the skin glands.

It is found in the secreted. Functionally, has antibacterial activity against the Gram-positive bacterium S.aureus ATCC 25923 (MIC=9 uM) and the Gram-negative bacterium E.coli ATCC 25726 (MIC=9 uM). This chain is Brevinin-2PTb, found in Pulchrana picturata (Malaysian fire frog).